Consider the following 117-residue polypeptide: NADPH-dependent 7-cyano-7-deazaguanine reductase (117 aa).

Cys-31 functions as the Thioimide intermediate in the catalytic mechanism. The active-site Proton donor is Asp-38. Residues 53–55 and 72–73 each bind substrate; these read IEL and YE.

Belongs to the GTP cyclohydrolase I family. QueF type 1 subfamily.

The protein resides in the cytoplasm. The enzyme catalyses 7-aminomethyl-7-carbaguanine + 2 NADP(+) = 7-cyano-7-deazaguanine + 2 NADPH + 3 H(+). The protein operates within tRNA modification; tRNA-queuosine biosynthesis. Catalyzes the NADPH-dependent reduction of 7-cyano-7-deazaguanine (preQ0) to 7-aminomethyl-7-deazaguanine (preQ1). In Chlorobaculum tepidum (strain ATCC 49652 / DSM 12025 / NBRC 103806 / TLS) (Chlorobium tepidum), this protein is NADPH-dependent 7-cyano-7-deazaguanine reductase.